The chain runs to 181 residues: CASP-like protein 5A1 (181 aa).

At 1-38 (MFASRPVVHPLEVAAPAHPVQQPAPGVLMKDLPGMPGT) the chain is on the cytoplasmic side. A helical transmembrane segment spans residues 39–59 (PGGLGLRVLQLLFAAISLAVM). Topologically, residues 60-77 (SSTADFASVSAFCYLITT) are extracellular. A helical membrane pass occupies residues 78 to 98 (TVLQCVWSLTVAIVDIYALLV). The Cytoplasmic segment spans residues 99 to 115 (KRCLQNRRAVTLFSIGD). The helical transmembrane segment at 116 to 136 (GITWLVSFSGACAAAGIPVLI) threads the bilayer. Residues 137–153 (DADLIMCSENPCASFQT) lie on the Extracellular side of the membrane. Residues 154–174 (AVAMGFMCCFSLLPSFLLNFY) traverse the membrane as a helical segment. The Cytoplasmic segment spans residues 175 to 181 (SIASSHG).

The protein belongs to the Casparian strip membrane proteins (CASP) family. In terms of assembly, homodimer and heterodimers.

The protein localises to the cell membrane. In Zea mays (Maize), this protein is CASP-like protein 5A1.